Reading from the N-terminus, the 249-residue chain is NAD kinase (249 aa).

Residue D49 is the Proton acceptor of the active site. Residues 49 to 50 (DG), R54, 115 to 116 (NE), K126, R143, D145, I153, 156 to 161 (TGYAFS), A180, and Q211 each bind NAD(+).

The protein belongs to the NAD kinase family. As to quaternary structure, homotetramer. Requires a divalent metal cation as cofactor.

Its subcellular location is the cytoplasm. The enzyme catalyses NAD(+) + ATP = ADP + NADP(+) + H(+). Its function is as follows. Involved in the regulation of the intracellular balance between NAD(H) and NADP(H), and is a key enzyme in the biosynthesis of NADP. Catalyzes specifically the phosphorylation on 2'-hydroxyl of the adenosine moiety of NAD to yield NADP. The sequence is that of NAD kinase from Archaeoglobus fulgidus (strain ATCC 49558 / DSM 4304 / JCM 9628 / NBRC 100126 / VC-16).